The following is a 109-amino-acid chain: Nucleoid-associated protein Sputw3181_1707 (109 aa).

It belongs to the YbaB/EbfC family. As to quaternary structure, homodimer.

The protein resides in the cytoplasm. It localises to the nucleoid. In terms of biological role, binds to DNA and alters its conformation. May be involved in regulation of gene expression, nucleoid organization and DNA protection. The protein is Nucleoid-associated protein Sputw3181_1707 of Shewanella sp. (strain W3-18-1).